The sequence spans 224 residues: Pleckstrin homology domain-containing family B member 2 (224 aa).

The PH domain maps to 2 to 109; the sequence is AFVKSGWLLR…WKIALQDART (108 aa). Lys-20 contributes to the a 1,2-diacyl-sn-glycero-3-phospho-L-serine binding site.

The protein localises to the recycling endosome membrane. Involved in retrograde transport of recycling endosomes. The protein is Pleckstrin homology domain-containing family B member 2 (PLEKHB2) of Gallus gallus (Chicken).